Here is a 1205-residue protein sequence, read N- to C-terminus: Nitric oxide synthase 3 (1205 aa).

The disordered stretch occupies residues 1-73 (MGNLKSVGQE…PPEGPKFPRV (73 aa)). The N-myristoyl glycine moiety is linked to residue Gly2. 2 S-palmitoyl cysteine lipidation sites follow: Cys15 and Cys26. Residues 15–27 (CGLGLGLGLGLCG) show a composition bias toward gly residues. A compositionally biased stretch (pro residues) spans 33–47 (TPAPEPSRAPAPATP). 2 residues coordinate Zn(2+): Cys96 and Cys101. An interaction with NOSIP region spans residues 100-488 (RCLGSLVLPR…PDPWKGSAAK (389 aa)). A (6R)-L-erythro-5,6,7,8-tetrahydrobiopterin-binding site is contributed by Ser104. Ser116 carries the phosphoserine; by CDK5 modification. Cys186 contributes to the heme b binding site. Residues Gln249, Trp358, Tyr359, Glu363, and Asn368 each contribute to the L-arginine site. Residues Ala448, Trp449, and Phe462 each contribute to the (6R)-L-erythro-5,6,7,8-tetrahydrobiopterin site. Tyr477 serves as a coordination point for heme b. The calmodulin-binding stretch occupies residues 492–512 (IARKKTFKEVANAVKISASLM). Thr497 carries the post-translational modification Phosphothreonine; by AMPK. Positions 522 to 705 (ASILYASETV…AFRGWAQAAF (184 aa)) constitute a Flavodoxin-like domain. FMN is bound by residues Ser528, Glu529, Thr530, Arg532, Ser574, and Thr575. A phosphoserine mark is found at Ser617, Ser635, and Ser640. FMN contacts are provided by Ser656, Cys663, Glu689, and Gln693. The 247-residue stretch at 758-1004 (RKMFQATVLS…IRAAPSFRLP (247 aa)) folds into the FAD-binding FR-type domain. Position 778 (Arg778) interacts with NADP(+). His800 serves as a coordination point for FAD. A disordered region spans residues 820-848 (EDPTPPTESVGVEQLEKGSPGGPPPSWVR). At Ser838 the chain carries Phosphoserine. Residues Arg940, Tyr942, Ser943, Thr958, Ala960, Tyr964, Val977, Cys978, and Ser979 each contribute to the FAD site. Residues Thr1018, Arg1051, Ser1080, Arg1081, Lys1087, Tyr1089, and Gln1091 each coordinate NADP(+). Position 1177 is a phosphothreonine (Thr1177). Ser1179 bears the Phosphoserine; by AMPK mark. The residue at position 1181 (Ser1181) is a Phosphoserine.

This sequence belongs to the NOS family. As to quaternary structure, homodimer. Interacts with NOSIP and NOSTRIN. Interacts with HSP90AB1. Forms a complex with ASL, ASS1 and SLC7A1; the complex regulates cell-autonomous L-arginine synthesis and citrulline recycling while channeling extracellular L-arginine to nitric oxide synthesis pathway. Heme b is required as a cofactor. Requires FAD as cofactor. The cofactor is FMN. It depends on (6R)-L-erythro-5,6,7,8-tetrahydrobiopterin as a cofactor. In terms of processing, phosphorylation by AMPK at Ser-1179 in the presence of Ca(2+)-calmodulin (CaM) activates activity. In absence of Ca(2+)-calmodulin, AMPK also phosphorylates Thr-497, resulting in inhibition of activity. Phosphorylation of Ser-116 by CDK5 reduces activity.

Its subcellular location is the membrane. It localises to the caveola. It is found in the cytoplasm. The protein localises to the cytoskeleton. The protein resides in the golgi apparatus. Its subcellular location is the cell membrane. It carries out the reaction 2 L-arginine + 3 NADPH + 4 O2 + H(+) = 2 L-citrulline + 2 nitric oxide + 3 NADP(+) + 4 H2O. With respect to regulation, stimulated by calcium/calmodulin. Inhibited by NOSIP and NOSTRIN. In terms of biological role, produces nitric oxide (NO) which is implicated in vascular smooth muscle relaxation through a cGMP-mediated signal transduction pathway. NO mediates vascular endothelial growth factor (VEGF)-induced angiogenesis in coronary vessels and promotes blood clotting through the activation of platelets. This chain is Nitric oxide synthase 3 (NOS3), found in Sus scrofa (Pig).